A 1331-amino-acid chain; its full sequence is Probable serine/threonine-protein kinase DDB_G0272254 (1331 aa).

Composition is skewed to low complexity over residues 1 to 42 (METS…NSSS), 96 to 116 (NDNN…NNNN), and 153 to 175 (TQQT…STPS). Disordered stretches follow at residues 1 to 43 (METS…SSSA), 92 to 132 (DKIC…QQIS), and 150 to 175 (ILNT…STPS). The next 2 helical transmembrane spans lie at 201–221 (FGFS…IYIL) and 224–244 (FVLK…FVIY). Residues 259 to 287 (SINDSDSSSNNNNNNNNTTTTNNDSASTK) are compositionally biased toward low complexity. 4 disordered regions span residues 259 to 300 (SIND…PETY), 320 to 419 (NLNN…LSKE), 435 to 464 (SVGK…SHNI), and 512 to 581 (AHSN…VVGN). Polar residues predominate over residues 288–299 (GNNNNEISSPET). A compositionally biased stretch (polar residues) spans 436–450 (VGKTHNRSSSGSDSI). Positions 514 to 531 (SNNNNNNNNSNTNNNNNN) are enriched in low complexity. Residues 532–555 (QSVSAPVSQLATPVYQTPGTNSVV) are compositionally biased toward polar residues. Positions 557–577 (NLENDNENNNDSFSDINDNNS) are enriched in low complexity. Kelch repeat units follow at residues 665 to 710 (SLVL…NHDY), 716 to 769 (KFYL…RYGN), 770 to 816 (RFLL…GHTS), 822 to 868 (KLII…ELND), 909 to 959 (NIVM…LIKN), and 962 to 1008 (KLFI…NNNN). A compositionally biased stretch (low complexity) spans 834-860 (NNNNNNNNNNNNNNNNNNNNNNNNNNN). Residues 834 to 862 (NNNNNNNNNNNNNNNNNNNNNNNNNNNKG) are disordered. The interval 976–1042 (NNNSSSGGNN…NNNNNNNNNN (67 aa)) is disordered. Positions 1073 to 1331 (IKIDKEIGKG…EITNYLTKTF (259 aa)) constitute a Protein kinase domain. Residues 1079–1087 (IGKGHFSKV) and lysine 1100 contribute to the ATP site. Catalysis depends on aspartate 1200, which acts as the Proton acceptor.

The protein belongs to the protein kinase superfamily. TKL Ser/Thr protein kinase family.

The protein resides in the membrane. The enzyme catalyses L-seryl-[protein] + ATP = O-phospho-L-seryl-[protein] + ADP + H(+). The catalysed reaction is L-threonyl-[protein] + ATP = O-phospho-L-threonyl-[protein] + ADP + H(+). The sequence is that of Probable serine/threonine-protein kinase DDB_G0272254 from Dictyostelium discoideum (Social amoeba).